The primary structure comprises 591 residues: Aspartate--tRNA(Asp/Asn) ligase (591 aa).

E175 serves as a coordination point for L-aspartate. The aspartate stretch occupies residues 199–202 (QQFK). 2 residues coordinate L-aspartate: R221 and H453. An ATP-binding site is contributed by 221-223 (RDE). Residue E486 participates in ATP binding. R493 serves as a coordination point for L-aspartate. 538 to 541 (GIDR) provides a ligand contact to ATP.

Belongs to the class-II aminoacyl-tRNA synthetase family. Type 1 subfamily. As to quaternary structure, homodimer.

Its subcellular location is the cytoplasm. The catalysed reaction is tRNA(Asx) + L-aspartate + ATP = L-aspartyl-tRNA(Asx) + AMP + diphosphate. Its function is as follows. Aspartyl-tRNA synthetase with relaxed tRNA specificity since it is able to aspartylate not only its cognate tRNA(Asp) but also tRNA(Asn). Reaction proceeds in two steps: L-aspartate is first activated by ATP to form Asp-AMP and then transferred to the acceptor end of tRNA(Asp/Asn). The protein is Aspartate--tRNA(Asp/Asn) ligase of Jannaschia sp. (strain CCS1).